Reading from the N-terminus, the 212-residue chain is Pyridoxine/pyridoxamine 5'-phosphate oxidase (212 aa).

Substrate is bound by residues 8-11 (RREY) and lysine 66. FMN-binding positions include 61-66 (RIVLLK), 76-77 (FT), arginine 82, lysine 83, and glutamine 105. The substrate site is built by tyrosine 123, arginine 127, and serine 131. FMN is bound by residues 140-141 (QS) and tryptophan 185. A substrate-binding site is contributed by 191 to 193 (RLH). An FMN-binding site is contributed by arginine 195.

It belongs to the pyridoxamine 5'-phosphate oxidase family. As to quaternary structure, homodimer. It depends on FMN as a cofactor.

It catalyses the reaction pyridoxamine 5'-phosphate + O2 + H2O = pyridoxal 5'-phosphate + H2O2 + NH4(+). It carries out the reaction pyridoxine 5'-phosphate + O2 = pyridoxal 5'-phosphate + H2O2. The protein operates within cofactor metabolism; pyridoxal 5'-phosphate salvage; pyridoxal 5'-phosphate from pyridoxamine 5'-phosphate: step 1/1. It functions in the pathway cofactor metabolism; pyridoxal 5'-phosphate salvage; pyridoxal 5'-phosphate from pyridoxine 5'-phosphate: step 1/1. Its function is as follows. Catalyzes the oxidation of either pyridoxine 5'-phosphate (PNP) or pyridoxamine 5'-phosphate (PMP) into pyridoxal 5'-phosphate (PLP). The polypeptide is Pyridoxine/pyridoxamine 5'-phosphate oxidase (Shewanella frigidimarina (strain NCIMB 400)).